Reading from the N-terminus, the 751-residue chain is MWNPLHETDSTSVAWRRPRWLCAGALVLAAGLFVLGFLFGWFIKSPNEAANISPQHNVKKAFLDELKAENIKTFLYNFTRIPHLAGTEQNFQLAKQIQSQWKEFGLDSVELAHYDVLLSYPNKTRPNYISIIDEDGNEIFNTSLFEPPPPGYENVSDVVPPFSAFSPQGMPEGDLVYVNYARTEDFFKLERDMKINCSGKILIARYGKIFRGNKVKNAQLAGAKGIILYSDPADYFAPGVQSYPDGWNLPGGGVQRGNILNLNGAGDPLTPGYPANEYAYRLQIAEAVGLPRIPVHPIGYSDAQKLLEKMGGSAPPDDSWKGSLHVPYNVGPGFTGNFSTQKVKMHIHSDNKVKRIYNVIGTLRGAVEPDRYVILGGHRDSWVFGGIDPQSGAAVVHEIVRSFGKLKKEGWRPRRTVLFASWDAEEYGLFGSTEWAEENSRILQERGVAYINADSSIEGNYTLRVDCTPLMYSLVYNLTKELQSPDEGFEGKSLFESWNEKSPSPEFSGLPRISKLGSGNDFEVFFQRLGIASGRARYTKDWVTNKFSSYPLYHSVYETYELVEKFYDPTFKYHLAVAQVRGGIVFELANSVVRPFDCRDYAVVLRNYADKLYNISMNHPQEMKAYSVSFDSLFSAVKNFTEIASNFSERVQDLDKNNPILLRIMNDQLMFLERAFIVPLGLPDRAFYRHVIYAPSSHNKYMGESFPGIYDALFDIENKVDPSKAWGEVKRQISIAAFTVQAAAGTLREVA.

At 1-19 (MWNPLHETDSTSVAWRRPR) the chain is on the cytoplasmic side. The residue at position 10 (Ser10) is a Phosphoserine. The helical; Signal-anchor for type II membrane protein transmembrane segment at 20–43 (WLCAGALVLAAGLFVLGFLFGWFI) threads the bilayer. At 44–750 (KSPNEAANIS…QAAAGTLREV (707 aa)) the chain is on the extracellular side. Residues Asn51, Asn77, Asn122, Asn141, Asn154, and Asn196 are each glycosylated (N-linked (GlcNAc...) asparagine). The substrate site is built by Arg211 and Asn258. Ca(2+)-binding residues include Thr270 and Tyr273. Residues 275–588 (ANEYAYRLQI…QVRGGIVFEL (314 aa)) form an NAALADase region. Asn337 carries an N-linked (GlcNAc...) asparagine glycan. Zn(2+)-binding residues include His378 and Asp388. A substrate-binding site is contributed by Glu425. Glu425 functions as the Nucleophile; for NAALADase activity in the catalytic mechanism. Position 426 (Glu426) interacts with Zn(2+). Ca(2+) contacts are provided by Glu434 and Glu437. Asp454 serves as a coordination point for Zn(2+). Residues Asn460 and Asn477 are each glycosylated (N-linked (GlcNAc...) asparagine). Residues 518 to 519 (SG), Asn520, 535 to 537 (RAR), Tyr553, and 553 to 554 (YH) contribute to the substrate site. His554 is a binding site for Zn(2+). Asn614 carries N-linked (GlcNAc...) asparagine glycosylation. Residue Ser629 is the Charge relay system of the active site. 2 N-linked (GlcNAc...) asparagine glycosylation sites follow: Asn639 and Asn646. Residues Asp667 and His690 each act as charge relay system in the active site. Substrate is bound at residue 700-701 (KY).

It belongs to the peptidase M28 family. M28B subfamily. As to quaternary structure, homodimer. The cofactor is Zn(2+). High expression in the duodenum and in the jejunum brush-border membrane. Weak expression in kidney.

It is found in the cell membrane. It carries out the reaction Release of an unsubstituted, C-terminal glutamyl residue, typically from Ac-Asp-Glu or folylpoly-gamma-glutamates.. The NAALADase activity is inhibited by quisqualic acid, beta-NAAG and 2-(phosphonomethyl) pentanedioic acid (PMPA). Ethanol ingestion decreases the folate hydrolase activity by 50%. Functionally, has both folate hydrolase and N-acetylated-alpha-linked-acidic dipeptidase (NAALADase) activity. Has a preference for tri-alpha-glutamate peptides. In the intestine, required for the uptake of folate. In the brain, modulates excitatory neurotransmission through the hydrolysis of the neuropeptide, N-aceylaspartylglutamate (NAAG), thereby releasing glutamate. In terms of biological role, also exhibits a dipeptidyl-peptidase IV type activity. In vitro, cleaves Gly-Pro-AMC. This is Glutamate carboxypeptidase 2 (FOLH1) from Sus scrofa (Pig).